Here is an 82-residue protein sequence, read N- to C-terminus: MAHKKGAGSTKNGRDSNSKRLGVKVYGDQPVKKGGIIIRQRGLTFKPGINVAVGRDYTLFALQEGDVKFETIADRKFVSVIK.

Residues 1-22 (MAHKKGAGSTKNGRDSNSKRLG) form a disordered region.

This sequence belongs to the bacterial ribosomal protein bL27 family.

The protein resides in the plastid. The protein localises to the chloroplast. The protein is Large ribosomal subunit protein bL27c (rpl27) of Chrysotila carterae (Marine alga).